The primary structure comprises 245 residues: MTLTASSSSRAVTNSPVVVALDYHNCDDALSFVDKIDPRDCRLKVGKEMFTLFGPQFVRELQQRGFDIFLDLKFHDIPNTAAHAVAAAADLGVWMVNVHASGGARMMTAAREALVPFGKDAPLLIAVTVLTSMEASDLADLGVTLSPADYAERLAALTQKCDLDGVVCSAQEAVRFKQVFGQEFKLVTPGIRPQGSEAGDQRRIMTPEQALAAGVDYMVIGRPVTQSVDPAQTLKAINASLQRSA.

Substrate is bound by residues Asp-22, Lys-44, 71–80, Thr-131, Arg-192, Gln-201, Gly-221, and Arg-222; that span reads DLKFHDIPNT. Lys-73 serves as the catalytic Proton donor.

Belongs to the OMP decarboxylase family. Type 1 subfamily. As to quaternary structure, homodimer.

The catalysed reaction is orotidine 5'-phosphate + H(+) = UMP + CO2. It participates in pyrimidine metabolism; UMP biosynthesis via de novo pathway; UMP from orotate: step 2/2. Functionally, catalyzes the decarboxylation of orotidine 5'-monophosphate (OMP) to uridine 5'-monophosphate (UMP). The chain is Orotidine 5'-phosphate decarboxylase from Shigella flexneri.